Consider the following 682-residue polypeptide: Tetratricopeptide repeat protein 39B (682 aa).

2 TPR repeats span residues 393-426 (SLVL…QEEW) and 626-659 (PFTL…YKDY).

The protein belongs to the TTC39 family.

In terms of biological role, regulates high density lipoprotein (HDL) cholesterol metabolism by promoting the ubiquitination and degradation of the oxysterols receptors LXR (NR1H2 and NR1H3). This chain is Tetratricopeptide repeat protein 39B, found in Homo sapiens (Human).